The primary structure comprises 1184 residues: Calcium-activated potassium channel subunit alpha-1a (1184 aa).

At 1–39 (MSNNINFNKNPDSSVSISKMDVIIPFTPDVPCDNNGQRM) the chain is on the extracellular side. A helical membrane pass occupies residues 40–60 (WWAFLASSMVTFFGGLFIILL). Topologically, residues 61–132 (WRTLKYLWTV…MISAQTLTGR (72 aa)) are cytoplasmic. Residues C71, C72, and C74 are each lipidated (S-palmitoyl cysteine). A helical transmembrane segment spans residues 133-153 (VLVVLVFALSIGALGIYFIDS). Residues 154-168 (SDPIESCQNFYKDFT) lie on the Extracellular side of the membrane. A helical membrane pass occupies residues 169-189 (LQIDMAFNVFFLLYFGLRFIA). Over 190-193 (ANDK) the chain is Cytoplasmic. A helical transmembrane segment spans residues 194–214 (LWFWLEVNSVVDFFTVPPVFV). Topologically, residues 215–254 (SVYLNRSWLGLRFLRALRLIQFSEILQFLNILKTSNSIKL) are extracellular. The chain crosses the membrane as a helical span at residues 255–275 (VNLCSIFISTWLTAAGFIHLV). Topologically, residues 276 to 289 (ENSGDPWENFQNSQ) are cytoplasmic. Residues 290 to 310 (PLSYWECVYLLMVTMSTVGYG) form a helical membrane-spanning segment. Topologically, residues 311-321 (DVYARTTLGRL) are extracellular. Residues 322 to 342 (FMVFFILGGLAMFASYVPEII) form a helical membrane-spanning segment. Over 343–1184 (ELIGNRKKYG…PPIREVEDEC (842 aa)) the chain is Cytoplasmic. An RCK N-terminal 1 domain is found at 361–503 (RKHIVVCGHI…WNWKEGDDAI (143 aa)). Residues E393, Q416, and E418 each coordinate Mg(2+). Residue N468 coordinates Ca(2+). The segment at 655–677 (EHPSTLSPKKKQRNGGMRNSPNC) is disordered. T659 is modified (phosphothreonine). Phosphoserine occurs at positions 661, 674, and 678. The RCK N-terminal 2 domain maps to 735–879 (SGHVVVCIFG…MDRSSPDNSP (145 aa)). T866 carries the post-translational modification Phosphothreonine. A phosphoserine mark is found at S874 and S878. Residues Q908, D911, D914, and D916 each contribute to the Ca(2+) site. Positions 908 to 916 (QFLDQDDDD) match the Calcium bowl motif. The segment at 1082-1143 (RASLSHSSHS…PEKRWFTDEA (62 aa)) is disordered. Low complexity predominate over residues 1084–1104 (SLSHSSHSSHSSSKKSSSVHS). The segment covering 1116–1125 (KAREARDKQN) has biased composition (basic and acidic residues).

Belongs to the potassium channel family. Calcium-activated (TC 1.A.1.3) subfamily. KCa1.1/KCNMA1 sub-subfamily. In terms of assembly, homotetramer; which constitutes the calcium-activated potassium channel. Phosphorylated. Post-translationally, palmitoylated.

The protein resides in the cell membrane. It carries out the reaction K(+)(in) = K(+)(out). Potassium channel activated by both membrane depolarization or increase in cytosolic Ca(2+) that mediates export of K(+). It is also activated by the concentration of cytosolic Mg(2+). Its activation dampens the excitatory events that elevate the cytosolic Ca(2+) concentration and/or depolarize the cell membrane. It therefore contributes to repolarization of the membrane potential. Involved in determining peripheral auditory sensitivity. The polypeptide is Calcium-activated potassium channel subunit alpha-1a (Danio rerio (Zebrafish)).